Reading from the N-terminus, the 205-residue chain is RNA pyrophosphohydrolase (205 aa).

The Nudix hydrolase domain maps to 6-149; that stretch reads GFRPNVGIVL…KRGVYARALR (144 aa). Positions 38–59 match the Nudix box motif; the sequence is GGMNTDETPVEAMYRELREETG. The interval 178 to 205 is disordered; the sequence is GSSAAGHDSPRKRPRKRNGARAMRINND. Positions 187 to 196 are enriched in basic residues; the sequence is PRKRPRKRNG.

It belongs to the Nudix hydrolase family. RppH subfamily. It depends on a divalent metal cation as a cofactor.

Accelerates the degradation of transcripts by removing pyrophosphate from the 5'-end of triphosphorylated RNA, leading to a more labile monophosphorylated state that can stimulate subsequent ribonuclease cleavage. The sequence is that of RNA pyrophosphohydrolase from Xanthomonas axonopodis pv. citri (strain 306).